Here is a 44-residue protein sequence, read N- to C-terminus: Mu-conotoxin-like Cal 12.1.2h (44 aa).

Disulfide bonds link cysteine 3–cysteine 16, cysteine 11–cysteine 28, cysteine 18–cysteine 33, and cysteine 27–cysteine 38. Tryptophan 17 bears the 6'-bromotryptophan mark. Proline 23 carries the 4-hydroxyproline modification. Residues tryptophan 36 and tryptophan 37 each carry the 6'-bromotryptophan modification. 4-hydroxyproline is present on proline 39. Position 43 is a 6'-bromotryptophan (tryptophan 43).

In terms of tissue distribution, expressed by the venom duct.

Its subcellular location is the secreted. Functionally, mu-conotoxins block voltage-gated sodium channels. This toxin reversibly blocks voltage-gated sodium channel in cephalopods, with no alteration in the voltage dependence of sodium conductance or on the kinetics of inactivation. This is Mu-conotoxin-like Cal 12.1.2h from Californiconus californicus (California cone).